The sequence spans 630 residues: tRNA uridine 5-carboxymethylaminomethyl modification enzyme MnmG (630 aa).

Position 13 to 18 (13 to 18 (GGGHAG)) interacts with FAD. NAD(+) is bound at residue 273–287 (GPRYCPSIEDKIHRF).

This sequence belongs to the MnmG family. Homodimer. Heterotetramer of two MnmE and two MnmG subunits. It depends on FAD as a cofactor.

The protein resides in the cytoplasm. In terms of biological role, NAD-binding protein involved in the addition of a carboxymethylaminomethyl (cmnm) group at the wobble position (U34) of certain tRNAs, forming tRNA-cmnm(5)s(2)U34. The sequence is that of tRNA uridine 5-carboxymethylaminomethyl modification enzyme MnmG from Pseudomonas putida (strain ATCC 700007 / DSM 6899 / JCM 31910 / BCRC 17059 / LMG 24140 / F1).